The sequence spans 304 residues: UDP-3-O-acyl-N-acetylglucosamine deacetylase (304 aa).

Residues H79, H238, and D242 each contribute to the Zn(2+) site. Residue H265 is the Proton donor of the active site.

The protein belongs to the LpxC family. Zn(2+) serves as cofactor.

The enzyme catalyses a UDP-3-O-[(3R)-3-hydroxyacyl]-N-acetyl-alpha-D-glucosamine + H2O = a UDP-3-O-[(3R)-3-hydroxyacyl]-alpha-D-glucosamine + acetate. The protein operates within glycolipid biosynthesis; lipid IV(A) biosynthesis; lipid IV(A) from (3R)-3-hydroxytetradecanoyl-[acyl-carrier-protein] and UDP-N-acetyl-alpha-D-glucosamine: step 2/6. Catalyzes the hydrolysis of UDP-3-O-myristoyl-N-acetylglucosamine to form UDP-3-O-myristoylglucosamine and acetate, the committed step in lipid A biosynthesis. This chain is UDP-3-O-acyl-N-acetylglucosamine deacetylase, found in Chromobacterium violaceum (strain ATCC 12472 / DSM 30191 / JCM 1249 / CCUG 213 / NBRC 12614 / NCIMB 9131 / NCTC 9757 / MK).